Reading from the N-terminus, the 602-residue chain is Potassium voltage-gated channel subfamily A member 5 (602 aa).

The tract at residues 1–107 is disordered; it reads MEISLVPMEN…EDQAPQDSGS (107 aa). Residues 1–202 are tetramerization domain; the sequence is MEISLVPMEN…FYQLGDEAME (202 aa). Over 1-238 the chain is Cytoplasmic; it reads MEISLVPMEN…LIFEYPESSG (238 aa). Residues 66 to 78 are compositionally biased toward pro residues; sequence PLPPMPQELPQPR. Ser81 is subject to Phosphoserine; by CK2 and PKA. Residue Lys212 forms a Glycyl lysine isopeptide (Lys-Gly) (interchain with G-Cter in SUMO) linkage. The helical transmembrane segment at 239-260 threads the bilayer; that stretch reads SARAIAIVSVLVILISIITFCL. Residues 261–314 are Extracellular-facing; sequence ETLPEFRDERELLRHPPVPPQPPAPAPGANGSGSGVLSSGPTVAPLLPRTLADP. A disordered region spans residues 274–297; the sequence is RHPPVPPQPPAPAPGANGSGSGVL. The span at 276 to 286 shows a compositional bias: pro residues; it reads PPVPPQPPAPA. Asn290 carries an N-linked (GlcNAc...) asparagine glycan. Residues 315-336 traverse the membrane as a helical segment; sequence FFIVETTCVIWFTFELLVRFFA. The S-palmitoyl cysteine moiety is linked to residue Cys337. The Cytoplasmic segment spans residues 337–347; that stretch reads CPSKAEFSRNI. Residues 348-368 traverse the membrane as a helical segment; that stretch reads MNIIDIVAIFPYFITLGTELA. The Extracellular portion of the chain corresponds to 369-384; the sequence is EQQPGGGGQNGQQAMS. Residues 385 to 405 traverse the membrane as a helical; Voltage-sensor segment; that stretch reads LAILRVIRLVRVFRIFKLSRH. The Cytoplasmic segment spans residues 406-420; the sequence is SKGLQILGKTLQASM. The tract at residues 407 to 420 is S4-S5 linker; sequence KGLQILGKTLQASM. The helical transmembrane segment at 421–442 threads the bilayer; sequence RELGLLIFFLFIGVILFSSAVY. At 443-456 the chain is on the extracellular side; the sequence is FAEADNQGSHFSSI. Positions 457–468 form an intramembrane region, helical; it reads PDAFWWAVVTMT. The Selectivity filter motif lies at 469–474; the sequence is TVGYGD. The stretch at 469 to 476 is an intramembrane region; the sequence is TVGYGDMR. Residues 477 to 483 lie on the Extracellular side of the membrane; that stretch reads PITVGGK. A helical transmembrane segment spans residues 484–512; it reads IVGSLCAIAGVLTIALPVPVIVSNFNYFY. Over 513-602 the chain is Cytoplasmic; sequence HRETDHEEQA…CLDTSRETDL (90 aa). A Glycyl lysine isopeptide (Lys-Gly) (interchain with G-Cter in SUMO) cross-link involves residue Lys525. 3 positions are modified to phosphoserine; by PKA: Ser535, Ser546, and Ser569. Residues 600-602 carry the PDZ-binding motif; sequence TDL.

This sequence belongs to the potassium channel family. A (Shaker) (TC 1.A.1.2) subfamily. Kv1.5/KCNA5 sub-subfamily. Homotetramer and heterotetramer of potassium channel proteins. Interacts with DLG1, which enhances channel currents. Forms a ternary complex with DLG1 and CAV3. Interacts with KCNAB1. Interacts with UBE2I. Interacts with XIRP2; the interaction is required for normal action potential configuration in the heart. In terms of processing, glycosylated. Post-translationally, sumoylated on Lys-212, and Lys-525, preferentially with SUMO3. Sumoylation regulates the voltage sensitivity of the channel. As to expression, expressed in the heart (at protein level). Expressed in the brain and weakly expressed in the thymus, skeletal muscle and spleen.

The protein localises to the cell membrane. It catalyses the reaction K(+)(in) = K(+)(out). Functionally, voltage-gated potassium channel that mediates transmembrane potassium transport in excitable membranes. Forms tetrameric potassium-selective channels through which potassium ions pass in accordance with their electrochemical gradient. The channel alternates between opened and closed conformations in response to the voltage difference across the membrane. Can form functional homotetrameric channels and heterotetrameric channels that contain variable proportions of KCNA1, KCNA2, KCNA4, KCNA5, and possibly other family members as well; channel properties depend on the type of alpha subunits that are part of the channel. Channel properties are modulated by cytoplasmic beta subunits that regulate the subcellular location of the alpha subunits and promote rapid inactivation. Homotetrameric channels display rapid activation and slow inactivation. Required for normal electrical conduction including formation of the infranodal ventricular conduction system and normal action potential configuration, as a result of its interaction with XIRP2. May play a role in regulating the secretion of insulin in normal pancreatic islets. Voltage-gated potassium channel that mediates transmembrane potassium transport in excitable membranes. Forms tetrameric potassium-selective channels through which potassium ions pass in accordance with their electrochemical gradient. The channel alternates between opened and closed conformations in response to the voltage difference across the membrane. In terms of biological role, inactive. Inhibits expression of isoform 1 and isoform 2. The chain is Potassium voltage-gated channel subfamily A member 5 (Kcna5) from Mus musculus (Mouse).